Here is a 275-residue protein sequence, read N- to C-terminus: Bis(5'-nucleosyl)-tetraphosphatase, symmetrical (275 aa).

This sequence belongs to the Ap4A hydrolase family.

It carries out the reaction P(1),P(4)-bis(5'-adenosyl) tetraphosphate + H2O = 2 ADP + 2 H(+). Functionally, hydrolyzes diadenosine 5',5'''-P1,P4-tetraphosphate to yield ADP. This chain is Bis(5'-nucleosyl)-tetraphosphatase, symmetrical, found in Haemophilus influenzae (strain PittGG).